A 376-amino-acid chain; its full sequence is Bifunctional enzyme IspD/IspF (376 aa).

The tract at residues 1–220 (MRIAAILVAG…RSMSISMIPR (220 aa)) is 2-C-methyl-D-erythritol 4-phosphate cytidylyltransferase. Residues 220-376 (RIGTGYDVHA…QAAVIIMIPA (157 aa)) are 2-C-methyl-D-erythritol 2,4-cyclodiphosphate synthase. Residues D226 and H228 each contribute to the a divalent metal cation site. 4-CDP-2-C-methyl-D-erythritol 2-phosphate contacts are provided by residues 226-228 (DVH) and 252-253 (HS). H260 provides a ligand contact to a divalent metal cation. Residues 274–276 (DIG), 350–353 (TTSE), F357, and R360 contribute to the 4-CDP-2-C-methyl-D-erythritol 2-phosphate site.

The protein in the N-terminal section; belongs to the IspD/TarI cytidylyltransferase family. IspD subfamily. In the C-terminal section; belongs to the IspF family. The cofactor is a divalent metal cation.

The enzyme catalyses 2-C-methyl-D-erythritol 4-phosphate + CTP + H(+) = 4-CDP-2-C-methyl-D-erythritol + diphosphate. It carries out the reaction 4-CDP-2-C-methyl-D-erythritol 2-phosphate = 2-C-methyl-D-erythritol 2,4-cyclic diphosphate + CMP. The protein operates within isoprenoid biosynthesis; isopentenyl diphosphate biosynthesis via DXP pathway; isopentenyl diphosphate from 1-deoxy-D-xylulose 5-phosphate: step 2/6. It functions in the pathway isoprenoid biosynthesis; isopentenyl diphosphate biosynthesis via DXP pathway; isopentenyl diphosphate from 1-deoxy-D-xylulose 5-phosphate: step 4/6. Bifunctional enzyme that catalyzes the formation of 4-diphosphocytidyl-2-C-methyl-D-erythritol from CTP and 2-C-methyl-D-erythritol 4-phosphate (MEP) (IspD), and catalyzes the conversion of 4-diphosphocytidyl-2-C-methyl-D-erythritol 2-phosphate (CDP-ME2P) to 2-C-methyl-D-erythritol 2,4-cyclodiphosphate (ME-CPP) with a corresponding release of cytidine 5-monophosphate (CMP) (IspF). This is Bifunctional enzyme IspD/IspF from Granulibacter bethesdensis (strain ATCC BAA-1260 / CGDNIH1).